The chain runs to 1008 residues: ATP-dependent DNA/RNA helicase DHX36 (1008 aa).

Positions M1 to G51 are required for recruitment to cytoplasmic stress granules. The tract at residues M1–K58 is disordered. The segment at M1–A104 is required for the pre-miR-134 transport. Residues M1–M200 form a necessary for nuclear and nucleolar caps localizations region. Positions R16–G48 are enriched in gly residues. The DSM (DHX36-specific motif) stretch occupies residues H53–K75. Residues H53–K105 form a required for G4-DNA- and G4-RNA-binding region. Positions Q72–I157 form a coiled coil. RecA-like domain regions lie at residues N106–I386 and P387–L628. At S161 the chain carries Phosphoserine. The Helicase ATP-binding domain maps to V217–P387. G233–T238 contributes to the ATP binding site. The interval R265–Q317 is necessary for interaction with single-stranded DNA at the 3'-end of the G4-DNA structure. The DEAH box signature appears at D334–H337. E335 and H337 together coordinate Mg(2+). The region spanning A477–R647 is the Helicase C-terminal domain. A necessary for interaction with single-stranded DNA at the 3'-end of the G4-DNA structure region spans residues W498–S557. The short motif at D517–M528 is the Nuclear localization signal element. ATP contacts are provided by residues S557 and R602–R605. Positions P629–V698 are WH domain. Necessary for interaction with single-stranded DNA at the 3'-end of the G4-DNA structure regions lie at residues E638 to P697, N849 to Y860, and H870 to Y900. Positions P841–V905 are OB-fold-like subdomains. Residue K947 is modified to N6-acetyllysine. The residue at position 963 (S963) is a Phosphoserine.

It belongs to the DEAD box helicase family. DEAH subfamily. Found in a multi-helicase-TICAM1 complex at least composed of DHX36, DDX1, DDX21 and TICAM1; this complex exists in resting cells with or without dsRNA poly(I:C) ligand stimulation. Interacts (via C-terminus) with TICAM1 (via TIR domain). Interacts (via C-terminus) with DDX21; this interaction serves as bridges to TICAM1. Interacts with TERT; this interaction is dependent on the ability of DHX36 to bind to the G-quadruplex RNA (G4-RNA) structure present in the telomerase RNA template component (TERC). Interacts with DKC1; this interaction is dependent on the ability of DHX36 to bind to the G4-RNA structure present in TERC. Interacts with PARN; this interaction stimulates PARN to enhance uPA mRNA decay. Interacts with EXOSC3; this interaction occurs in a RNase-insensitive manner. Interacts with EXOSC10; this interaction occurs in a RNase-insensitive manner. Interacts with ILF3; this interaction occurs in a RNA-dependent manner. Interacts with ELAVL1; this interaction occurs in an RNA-dependent manner. Interacts with DDX5; this interaction occurs in a RNA-dependent manner. Interacts with DDX17; this interaction occurs in a RNA-dependent manner. Interacts with HDAC1; this interaction occurs in a RNA-dependent manner. Interacts with HDAC3; this interaction occurs in a RNA-dependent manner. Interacts with HDAC4. Interacts with AGO1. Interacts with AGO2. Interacts with ERCC6. The cofactor is Mg(2+). As to expression, highly expressed in testis.

Its subcellular location is the nucleus. The protein resides in the cytoplasm. It is found in the cytosol. It localises to the stress granule. The protein localises to the nucleus speckle. Its subcellular location is the chromosome. The protein resides in the telomere. It is found in the mitochondrion. It localises to the perikaryon. The protein localises to the cell projection. Its subcellular location is the dendrite. The protein resides in the axon. It carries out the reaction ATP + H2O = ADP + phosphate + H(+). Its activity is regulated as follows. ATPase activity is enhanced in the presence of homomeric poly(U) RNAs, but not by double-stranded DNA (dsDNA), double-stranded RNA (dsRNA) and tRNA. Its function is as follows. Multifunctional ATP-dependent helicase that unwinds G-quadruplex (G4) structures. Plays a role in many biological processes such as genomic integrity, gene expression regulations and as a sensor to initiate antiviral responses. G4 structures correspond to helical structures containing guanine tetrads. Binds with high affinity to and unwinds G4 structures that are formed in nucleic acids (G4-DNA and G4-RNA). Plays a role in genomic integrity. Converts the G4-RNA structure present in telomerase RNA template component (TREC) into a double-stranded RNA to promote P1 helix formation that acts as a template boundary ensuring accurate reverse transcription. Plays a role in transcriptional regulation. Resolves G4-DNA structures in promoters of genes, such as YY1, KIT/c-kit and ALPL and positively regulates their expression. Plays a role in post-transcriptional regulation. Unwinds a G4-RNA structure located in the 3'-UTR polyadenylation site of the pre-mRNA TP53 and stimulates TP53 pre-mRNA 3'-end processing in response to ultraviolet (UV)-induced DNA damage. Binds to the precursor-microRNA-134 (pre-miR-134) terminal loop and regulates its transport into the synapto-dendritic compartment. Involved in the pre-miR-134-dependent inhibition of target gene expression and the control of dendritic spine size. Plays a role in the regulation of cytoplasmic mRNA translation and mRNA stability. Binds to both G4-RNA structures and alternative non-quadruplex-forming sequence within the 3'-UTR of the PITX1 mRNA regulating negatively PITX1 protein expression. Binds to both G4-RNA structure in the 5'-UTR and AU-rich elements (AREs) localized in the 3'-UTR of NKX2-5 mRNA to either stimulate protein translation or induce mRNA decay in an ELAVL1-dependent manner, respectively. Also binds to ARE sequences present in several mRNAs mediating exosome-mediated 3'-5' mRNA degradation. Involved in cytoplasmic urokinase-type plasminogen activator (uPA) mRNA decay. Component of a multi-helicase-TICAM1 complex that acts as a cytoplasmic sensor of viral double-stranded RNA (dsRNA) and plays a role in the activation of a cascade of antiviral responses including the induction of pro-inflammatory cytokines via the adapter molecule TICAM1. Required for early embryonic development and hematopoiesis. Involved in the regulation of cardioblast differentiation and proliferation during heart development. Involved in spermatogonia differentiation. May play a role in ossification. The chain is ATP-dependent DNA/RNA helicase DHX36 from Homo sapiens (Human).